A 329-amino-acid chain; its full sequence is Calcium homeostasis modulator protein (329 aa).

Residues 1-14 (MTTSINSVVTVFQN) are Cytoplasmic-facing. Residues 15 to 35 (VFTNHGSTLLNGILIATTVGG) traverse the membrane as a helical segment. The Extracellular portion of the chain corresponds to 36-53 (QSLVRKLTFSCPCAYPLN). The helical transmembrane segment at 54–74 (IYHSLVFMFGPTAALLLIGIT) threads the bilayer. The Cytoplasmic segment spans residues 75–103 (VNSTTWKLAHGFFFRVRDTRHSWKTTCVS). The helical transmembrane segment at 104-124 (WIEVLIQSSVAPIAWLFVVFL) threads the bilayer. The Extracellular portion of the chain corresponds to 125 to 191 (DGGYYRCYRS…DASYLEAESQ (67 aa)). N-linked (GlcNAc...) asparagine glycosylation is present at asparagine 148. A helical membrane pass occupies residues 192–212 (IYAWGLLLFSGVAAFLVITCN). At 213-329 (RMCDKYTLVQ…QIIVDETKED (117 aa)) the chain is on the cytoplasmic side.

This sequence belongs to the CALHM family. Expressed in head and body wall muscles, IL2, ASG, ASI, ASJ, PHA and PHB sensory neurons, and spermatheca.

The protein localises to the cell membrane. Pore-forming subunit of a voltage-gated ion channel. Permeable to monovalent cations, divalent cations and anions with selectivity Ca(2+) &gt; Mg(2+) &gt; Na(+) = K(+) &gt; Cl(-). Acts both as a voltage-gated and calcium-activated ion channel. Required for normal locomotion. The sequence is that of Calcium homeostasis modulator protein from Caenorhabditis elegans.